The following is a 198-amino-acid chain: FMN-dependent NADH:quinone oxidoreductase (198 aa).

FMN is bound by residues S10, 16–18, 94–97, and 138–141; these read SQS, MYNF, and TRGG.

It belongs to the azoreductase type 1 family. Homodimer. FMN is required as a cofactor.

It carries out the reaction 2 a quinone + NADH + H(+) = 2 a 1,4-benzosemiquinone + NAD(+). The enzyme catalyses N,N-dimethyl-1,4-phenylenediamine + anthranilate + 2 NAD(+) = 2-(4-dimethylaminophenyl)diazenylbenzoate + 2 NADH + 2 H(+). Quinone reductase that provides resistance to thiol-specific stress caused by electrophilic quinones. In terms of biological role, also exhibits azoreductase activity. Catalyzes the reductive cleavage of the azo bond in aromatic azo compounds to the corresponding amines. The polypeptide is FMN-dependent NADH:quinone oxidoreductase (Shewanella baltica (strain OS223)).